The primary structure comprises 124 residues: Phosphoribosyl-ATP pyrophosphatase (124 aa).

It belongs to the PRA-PH family.

Its subcellular location is the cytoplasm. It catalyses the reaction 1-(5-phospho-beta-D-ribosyl)-ATP + H2O = 1-(5-phospho-beta-D-ribosyl)-5'-AMP + diphosphate + H(+). The protein operates within amino-acid biosynthesis; L-histidine biosynthesis; L-histidine from 5-phospho-alpha-D-ribose 1-diphosphate: step 2/9. This chain is Phosphoribosyl-ATP pyrophosphatase, found in Ralstonia pickettii (strain 12J).